The chain runs to 1186 residues: Pesticidal crystal protein Cry14Aa (1186 aa).

This sequence belongs to the delta endotoxin family.

Functionally, promotes colloidosmotic lysis by binding to the midgut epithelial cells of insects. This chain is Pesticidal crystal protein Cry14Aa (cry14Aa), found in Bacillus thuringiensis subsp. sotto.